The primary structure comprises 510 residues: NAD(P)H-quinone oxidoreductase subunit 2, chloroplastic (510 aa).

12 consecutive transmembrane segments (helical) span residues 24 to 44 (LLLFHGSFIFPECILIFGLIL), 59 to 79 (WFYFISSTSLVISITALLFRW), 99 to 119 (IFQFLILLCSTLCIPLSVEYI), 124 to 144 (MAITEFLLFVLTATLGGMFLC), 149 to 169 (LITIFVAPECFSLCSYLLSGY), 183 to 203 (YLLMGGASSSILVHGFSWLYG), 229 to 249 (ISIALIFITVGIGFKLSPAPF), 295 to 315 (WHLLLEILAILSMILGNLIAI), 323 to 343 (MLAYSSIGQIGYVIIGIIVGD), 354 to 374 (YMLFYISMNLGTFACIVLFGL), 395 to 415 (ALSSALCLLSLGGLPPLAGFF), and 418 to 438 (LYLFWCGWQAGLYFLVSIGLL).

This sequence belongs to the complex I subunit 2 family. In terms of assembly, NDH is composed of at least 16 different subunits, 5 of which are encoded in the nucleus.

The protein localises to the plastid. The protein resides in the chloroplast thylakoid membrane. The enzyme catalyses a plastoquinone + NADH + (n+1) H(+)(in) = a plastoquinol + NAD(+) + n H(+)(out). It carries out the reaction a plastoquinone + NADPH + (n+1) H(+)(in) = a plastoquinol + NADP(+) + n H(+)(out). NDH shuttles electrons from NAD(P)H:plastoquinone, via FMN and iron-sulfur (Fe-S) centers, to quinones in the photosynthetic chain and possibly in a chloroplast respiratory chain. The immediate electron acceptor for the enzyme in this species is believed to be plastoquinone. Couples the redox reaction to proton translocation, and thus conserves the redox energy in a proton gradient. This Ananas comosus (Pineapple) protein is NAD(P)H-quinone oxidoreductase subunit 2, chloroplastic.